A 300-amino-acid polypeptide reads, in one-letter code: Acetylglutamate kinase (300 aa).

Substrate-binding positions include 68-69 (GG), arginine 90, and asparagine 194.

The protein belongs to the acetylglutamate kinase family. ArgB subfamily.

The protein resides in the cytoplasm. The catalysed reaction is N-acetyl-L-glutamate + ATP = N-acetyl-L-glutamyl 5-phosphate + ADP. It functions in the pathway amino-acid biosynthesis; L-arginine biosynthesis; N(2)-acetyl-L-ornithine from L-glutamate: step 2/4. Catalyzes the ATP-dependent phosphorylation of N-acetyl-L-glutamate. The chain is Acetylglutamate kinase from Methanocaldococcus jannaschii (strain ATCC 43067 / DSM 2661 / JAL-1 / JCM 10045 / NBRC 100440) (Methanococcus jannaschii).